Reading from the N-terminus, the 695-residue chain is Translation initiation factor IF-2 (695 aa).

The disordered stretch occupies residues 60 to 92 (KKSASSKKKTEKEVEEEEIETPKKKKKQEEKIP). Positions 184–358 (QRPPVVTVMG…EMSEIKCIPT (175 aa)) constitute a tr-type G domain. The tract at residues 193-200 (GHVDHGKT) is G1. Residue 193 to 200 (GHVDHGKT) coordinates GTP. The segment at 218–222 (GITQS) is G2. The G3 stretch occupies residues 239 to 242 (DTPG). Residues 239–243 (DTPGH) and 293–296 (NKID) contribute to the GTP site. The tract at residues 293-296 (NKID) is G4. The G5 stretch occupies residues 330–332 (SAK).

The protein belongs to the TRAFAC class translation factor GTPase superfamily. Classic translation factor GTPase family. IF-2 subfamily.

The protein localises to the cytoplasm. In terms of biological role, one of the essential components for the initiation of protein synthesis. Protects formylmethionyl-tRNA from spontaneous hydrolysis and promotes its binding to the 30S ribosomal subunits. Also involved in the hydrolysis of GTP during the formation of the 70S ribosomal complex. The protein is Translation initiation factor IF-2 of Kosmotoga olearia (strain ATCC BAA-1733 / DSM 21960 / TBF 19.5.1).